The chain runs to 188 residues: UPF0398 protein ABC2016 (188 aa).

This sequence belongs to the UPF0398 family.

This chain is UPF0398 protein ABC2016, found in Shouchella clausii (strain KSM-K16) (Alkalihalobacillus clausii).